The sequence spans 86 residues: Photosystem I reaction center subunit PsaK (86 aa).

Transmembrane regions (helical) follow at residues 15-35 (SWSI…IGLG) and 57-77 (GLPE…GAII).

It belongs to the PsaG/PsaK family.

Its subcellular location is the plastid. The protein localises to the chloroplast thylakoid membrane. In Gracilaria tenuistipitata var. liui (Red alga), this protein is Photosystem I reaction center subunit PsaK.